Consider the following 134-residue polypeptide: UPF0412 protein YaaI (134 aa).

The signal sequence occupies residues 1-23; it reads MKSVFTLSASLAISLLLCCTAQA.

The protein belongs to the UPF0412 family.

The chain is UPF0412 protein YaaI from Escherichia coli O7:K1 (strain IAI39 / ExPEC).